Here is a 542-residue protein sequence, read N- to C-terminus: Glutamyl-tRNA(Gln) amidotransferase subunit B, mitochondrial (542 aa).

A mitochondrion-targeting transit peptide spans 1 to 66; it reads MRVFRRFYQV…PNSHTSFFDI (66 aa).

The protein belongs to the GatB/GatE family. GatB subfamily. In terms of assembly, subunit of the heterotrimeric GatFAB amidotransferase (AdT) complex, composed of A, B and F subunits.

The protein localises to the mitochondrion. It carries out the reaction L-glutamyl-tRNA(Gln) + L-glutamine + ATP + H2O = L-glutaminyl-tRNA(Gln) + L-glutamate + ADP + phosphate + H(+). In terms of biological role, allows the formation of correctly charged Gln-tRNA(Gln) through the transamidation of misacylated Glu-tRNA(Gln) in the mitochondria. The reaction takes place in the presence of glutamine and ATP through an activated gamma-phospho-Glu-tRNA(Gln). This Zygosaccharomyces rouxii (strain ATCC 2623 / CBS 732 / NBRC 1130 / NCYC 568 / NRRL Y-229) protein is Glutamyl-tRNA(Gln) amidotransferase subunit B, mitochondrial.